A 1129-amino-acid polypeptide reads, in one-letter code: Serine/threonine-protein kinase LATS1 (1129 aa).

The span at Met1–Arg11 shows a compositional bias: basic and acidic residues. The tract at residues Met1–Phe71 is disordered. The segment covering Pro19 to Met30 has biased composition (polar residues). Over residues Asp46 to Gln64 the composition is skewed to basic and acidic residues. Positions Glu100–Met141 constitute a UBA domain. Disordered stretches follow at residues Arg148–Ser216 and Pro228–Arg276. The span at Asn235 to Trp268 shows a compositional bias: pro residues. Thr246 carries the phosphothreonine modification. Ser278 carries the phosphoserine modification. 4 disordered regions span residues Pro292–Gln317, Pro363–Ser407, Trp432–Pro492, and Pro513–Ile630. Over residues Tyr300–Pro312 the composition is skewed to pro residues. Residues Pro372 to Tyr375 carry the PPxY motif 1 motif. The segment covering Ala380 to Ala392 has biased composition (polar residues). Positions Pro433–Ser445 are enriched in low complexity. The segment covering Trp453–Ser481 has biased composition (polar residues). Ser463 carries the phosphoserine; by NUAK1 and NUAK2 modification. Composition is skewed to low complexity over residues Ala482–Pro492 and Pro520–Pro530. An interaction with YAP1 region spans residues Thr525 to Gln654. The PPxY motif 2 signature appears at Pro555–Tyr558. Positions Pro578–Gln608 are enriched in basic and acidic residues. Residue Ser612 is modified to Phosphoserine. Residues Lys620 to Arg629 are compositionally biased toward basic and acidic residues. Ser673 carries the phosphoserine modification. Residues Phe704–Phe1009 form the Protein kinase domain. ATP is bound by residues Leu710 to Val718 and Lys733. Asp827 (proton acceptor) is an active-site residue. The residue at position 908 (Ser908) is a Phosphoserine; by STK3/MST2. In terms of domain architecture, AGC-kinase C-terminal spans Lys1010 to Pro1089. The residue at position 1078 (Thr1078) is a Phosphothreonine; by STK3/MST2. Residues Gln1104–Val1129 are disordered.

The protein belongs to the protein kinase superfamily. AGC Ser/Thr protein kinase family. As to quaternary structure, complexes with CDK1 in early mitosis. LATS1-associated CDK1 has no mitotic cyclin partner and no apparent kinase activity. Binds phosphorylated ZYX, locating this protein to the mitotic spindle and suggesting a role for actin regulatory proteins during mitosis. Binds to and colocalizes with LIMK1 at the actomyosin contractile ring during cytokinesis. Interacts (via PPxY motif 2) with YAP1 (via WW domains). Interacts with MOB1A and MOB1B. Interacts with LIMD1, WTIP and AJUBA. Interacts with ESR1, DCAF1 and DCAF13; probably recruits DCAF1 and DCAF13 to ESR1 to promote ESR1 ubiquitination and ubiquitin-mediated proteasomal degradation. Interacts with STK3/MST2; this interaction is inhibited in the presence of DLG5. Interacts with SCRIB in the presence of DLG5. Interacts with WWTR1/TAZ. Interacts with WWC1, WWC2 and WWC3 (via their WW domains). The cofactor is Mg(2+). Post-translationally, autophosphorylated and phosphorylated during M-phase of the cell cycle. Phosphorylated by STK3/MST2 at Ser-908 and Thr-1078, which results in its activation. Phosphorylated by MAP4Ks; in parallel to STK3/MST2 and resulting to its activation. Phosphorylation at Ser-463 by NUAK1 and NUAK2 leads to decreased protein level and is required to regulate cellular senescence and cellular ploidy.

It is found in the cytoplasm. Its subcellular location is the cytoskeleton. The protein localises to the microtubule organizing center. It localises to the centrosome. The protein resides in the spindle. It is found in the midbody. Its subcellular location is the spindle pole body. The enzyme catalyses L-seryl-[protein] + ATP = O-phospho-L-seryl-[protein] + ADP + H(+). It catalyses the reaction L-threonyl-[protein] + ATP = O-phospho-L-threonyl-[protein] + ADP + H(+). Its function is as follows. Negative regulator of YAP1 in the Hippo signaling pathway that plays a pivotal role in organ size control and tumor suppression by restricting proliferation and promoting apoptosis. The core of this pathway is composed of a kinase cascade wherein STK3/MST2 and STK4/MST1, in complex with its regulatory protein SAV1, phosphorylates and activates LATS1/2 in complex with its regulatory protein MOB1, which in turn phosphorylates and inactivates YAP1 oncoprotein and WWTR1/TAZ. Phosphorylation of YAP1 by LATS1 inhibits its translocation into the nucleus to regulate cellular genes important for cell proliferation, cell death, and cell migration. Acts as a tumor suppressor which plays a critical role in maintenance of ploidy through its actions in both mitotic progression and the G1 tetraploidy checkpoint. Negatively regulates G2/M transition by down-regulating CDK1 kinase activity. Involved in the control of p53 expression. Affects cytokinesis by regulating actin polymerization through negative modulation of LIMK1. May also play a role in endocrine function. Plays a role in mammary gland epithelial cell differentiation, both through the Hippo signaling pathway and the intracellular estrogen receptor signaling pathway by promoting the degradation of ESR1. Acts as an activator of the NLRP3 inflammasome by mediating phosphorylation of 'Ser-265' of NLRP3 following NLRP3 palmitoylation, promoting NLRP3 activation by NEK7. The sequence is that of Serine/threonine-protein kinase LATS1 from Mus musculus (Mouse).